A 219-amino-acid chain; its full sequence is Ribose-5-phosphate isomerase A (219 aa).

Residues 28–31 (TGST), 81–84 (DGAD), and 94–97 (KGGG) contribute to the substrate site. Glutamate 103 serves as the catalytic Proton acceptor. Lysine 121 is a binding site for substrate.

The protein belongs to the ribose 5-phosphate isomerase family. As to quaternary structure, homodimer.

The catalysed reaction is aldehydo-D-ribose 5-phosphate = D-ribulose 5-phosphate. It functions in the pathway carbohydrate degradation; pentose phosphate pathway; D-ribose 5-phosphate from D-ribulose 5-phosphate (non-oxidative stage): step 1/1. In terms of biological role, catalyzes the reversible conversion of ribose-5-phosphate to ribulose 5-phosphate. This chain is Ribose-5-phosphate isomerase A, found in Escherichia fergusonii (strain ATCC 35469 / DSM 13698 / CCUG 18766 / IAM 14443 / JCM 21226 / LMG 7866 / NBRC 102419 / NCTC 12128 / CDC 0568-73).